Consider the following 196-residue polypeptide: Late protein I196L (196 aa).

2 consecutive repeat copies span residues 28–48 (SNYL…PTTS) and 49–70 (SNYL…TTTS). The stretch at 71–92 (SNYLTSAIPNIISDKEDDTPFS) is one 3; approximate repeat.

The protein belongs to the asfivirus I196L family.

This African swine fever virus (strain Badajoz 1971 Vero-adapted) (Ba71V) protein is Late protein I196L.